A 156-amino-acid polypeptide reads, in one-letter code: MSRRHRAEKREINPDPKFGDTVVTKFMNAIMFEGKKSVAERIVYGALDQVQEKTKQEPVAVFHQALDNVAPHVEVRSRRVGGATYQVPVDVRPERRQALAIRWLISAARGRNEKTMVERLSGELLDASSNRGTAVKKREDTHKMAEANRAFSHYRW.

The protein belongs to the universal ribosomal protein uS7 family. In terms of assembly, part of the 30S ribosomal subunit. Contacts proteins S9 and S11.

One of the primary rRNA binding proteins, it binds directly to 16S rRNA where it nucleates assembly of the head domain of the 30S subunit. Is located at the subunit interface close to the decoding center, probably blocks exit of the E-site tRNA. In Chelativorans sp. (strain BNC1), this protein is Small ribosomal subunit protein uS7.